The chain runs to 732 residues: MSKMRVYEYAKKNNVPSKDVIHKLKEMNIEVTNHMATLEPEVVEKLDHTYNKKNERPQASAPKEKQKAPVKPKNYVDDFDDEDEEVVKTKVPKKKSANKKKEGKKHDLQLQQQEKKIFHQQKKKIKGKAKAKEQQPVQQEQPMKKEKELPKKITFEGTLTVAELAKKLGREPSEIIKKLFMLGVMATINQELDKDAIELICSDYGVEVEEKVVIDETNFESIEIVDDPEDLVERPPVVTIMGHVDHGKTTLLDSIRHSKVTEQEAGGITQHIGAYQVTVNDKKITFLDTPGHEAFTTMRARGAQVTDIVVLVVAADDGVMPQTVEAINHAKAANVPIIVAINKMDKPDANPDRVMQELMEYNLIPEEWGGDTIFCKLSAKTGEGIDNLLEMILLVSEMEELKANPNRRATGTVIEAKLDKGRGPVATLLVQAGTLHVGDPIVVGCTYGRVRAMVNDTGRRVKEAGPSTPVEITGLHEVPQAGDRFMVFEDEKKARQIGEARAQKQLMEQRNMKARVSLDDLFEQIKQGEMKELNIIVKADVQGSVEALVAALQKIEVEGVRVKIIHAAVGAITESDILLATTSNAIVIGFNVRPDANAKRVAESEKVDIRLHRIIYKVIEEIEAAMKGMLDPEYEEKVIGQAEVRQTFKVSKVGTIAGCYVTDGKITRDSKVRLIRQGIVVYEGEIDSLKRFKDDVKEVMQGYECGLTIKNFNDIKEGDVIEAYIMQEVERK.

Residues 40–147 (PEVVEKLDHT…QQEQPMKKEK (108 aa)) form a disordered region. Residues 42-67 (VVEKLDHTYNKKNERPQASAPKEKQK) are compositionally biased toward basic and acidic residues. A compositionally biased stretch (basic residues) spans 90-103 (KVPKKKSANKKKEG). Over residues 104-117 (KKHDLQLQQQEKKI) the composition is skewed to basic and acidic residues. Over residues 118-129 (FHQQKKKIKGKA) the composition is skewed to basic residues. The tr-type G domain occupies 233–402 (ERPPVVTIMG…LLVSEMEELK (170 aa)). The interval 242–249 (GHVDHGKT) is G1. 242–249 (GHVDHGKT) contributes to the GTP binding site. Residues 267–271 (GITQH) are G2. The segment at 288 to 291 (DTPG) is G3. Residues 288–292 (DTPGH) and 342–345 (NKMD) contribute to the GTP site. Positions 342–345 (NKMD) are G4. The segment at 378 to 380 (SAK) is G5.

It belongs to the TRAFAC class translation factor GTPase superfamily. Classic translation factor GTPase family. IF-2 subfamily.

The protein resides in the cytoplasm. One of the essential components for the initiation of protein synthesis. Protects formylmethionyl-tRNA from spontaneous hydrolysis and promotes its binding to the 30S ribosomal subunits. Also involved in the hydrolysis of GTP during the formation of the 70S ribosomal complex. This Geobacillus sp. (strain WCH70) protein is Translation initiation factor IF-2.